Consider the following 196-residue polypeptide: ATP-dependent Clp protease proteolytic subunit (196 aa).

Ser-101 serves as the catalytic Nucleophile. The active site involves His-126.

This sequence belongs to the peptidase S14 family. In terms of assembly, component of the chloroplastic Clp protease core complex.

The protein resides in the plastid. The protein localises to the chloroplast stroma. The catalysed reaction is Hydrolysis of proteins to small peptides in the presence of ATP and magnesium. alpha-casein is the usual test substrate. In the absence of ATP, only oligopeptides shorter than five residues are hydrolyzed (such as succinyl-Leu-Tyr-|-NHMec, and Leu-Tyr-Leu-|-Tyr-Trp, in which cleavage of the -Tyr-|-Leu- and -Tyr-|-Trp bonds also occurs).. Cleaves peptides in various proteins in a process that requires ATP hydrolysis. Has a chymotrypsin-like activity. Plays a major role in the degradation of misfolded proteins. This chain is ATP-dependent Clp protease proteolytic subunit, found in Vitis vinifera (Grape).